Here is a 182-residue protein sequence, read N- to C-terminus: CDP-diacylglycerol--glycerol-3-phosphate 3-phosphatidyltransferase (182 aa).

Over 1 to 12 the chain is Cytoplasmic; it reads MQLNIPTWLTLF. The helical transmembrane segment at 13-37 threads the bilayer; it reads RVVLIPFFVLAFYLPFVWAPMVCAI. Topologically, residues 38 to 60 are periplasmic; sequence IFVFAAATDWFDGFLARRWKQTT. Residues 61-81 traverse the membrane as a helical segment; it reads RFGAFLDPVADKVMVAIALVL. Residues 82–86 lie on the Cytoplasmic side of the membrane; sequence VAEHY. The helical transmembrane segment at 87–107 threads the bilayer; sequence HVWWITLPAATMIAREIIISS. Residues 108-145 lie on the Periplasmic side of the membrane; the sequence is LREWMAEIGKRSSVAVSWIGKVKTTAQMGSLVGLLWRP. The helical transmembrane segment at 146 to 168 threads the bilayer; it reads DHNIELASFVLLYIAAVLTFWSM. Topologically, residues 169–181 are cytoplasmic; sequence FQYLNAAWKDLLE.

The protein belongs to the CDP-alcohol phosphatidyltransferase class-I family.

The protein resides in the cell inner membrane. The enzyme catalyses a CDP-1,2-diacyl-sn-glycerol + sn-glycerol 3-phosphate = a 1,2-diacyl-sn-glycero-3-phospho-(1'-sn-glycero-3'-phosphate) + CMP + H(+). Its pathway is phospholipid metabolism; phosphatidylglycerol biosynthesis; phosphatidylglycerol from CDP-diacylglycerol: step 1/2. Catalyzes the conversion of cytidine diphosphate diacylglycerol (CDP-DG) and glycerol 3-phosphate into phosphatidylglycerol. Essential for the synthesis of anionic phospholipids, thereby playing a role in balancing the ratio of zwitterionic and anionic phospholipids, which is thought to be important for normal membrane function. The protein is CDP-diacylglycerol--glycerol-3-phosphate 3-phosphatidyltransferase of Yersinia enterocolitica serotype O:8 / biotype 1B (strain NCTC 13174 / 8081).